Reading from the N-terminus, the 757-residue chain is Polyribonucleotide nucleotidyltransferase (757 aa).

Residues Asp-531 and Asp-537 each coordinate Mg(2+). The 60-residue stretch at 597–656 (PRVTTIRVPVDKIGEVIGPKGKIINAITEETGAQISIEDDGTVFVGATDGPSAQAAIDRI) folds into the KH domain. The S1 motif domain occupies 668 to 737 (GERFLGTVVK…KRGKISLVLV (70 aa)).

The protein belongs to the polyribonucleotide nucleotidyltransferase family. Mg(2+) serves as cofactor.

The protein localises to the cytoplasm. It carries out the reaction RNA(n+1) + phosphate = RNA(n) + a ribonucleoside 5'-diphosphate. Functionally, involved in mRNA degradation. Catalyzes the phosphorolysis of single-stranded polyribonucleotides processively in the 3'- to 5'-direction. In Mycolicibacterium paratuberculosis (strain ATCC BAA-968 / K-10) (Mycobacterium paratuberculosis), this protein is Polyribonucleotide nucleotidyltransferase.